The following is a 47-amino-acid chain: uncharacterized protein (47 aa).

Residues methionine 1–leucine 25 form the signal peptide.

This is an uncharacterized protein from Saccharomyces cerevisiae (strain ATCC 204508 / S288c) (Baker's yeast).